The primary structure comprises 262 residues: MYRPEKNSIRKVTMQREDLIQSMFAPPEAPPVRWRIAPAPVDYQEAVETMEREAADIAAGTADELVWLVEHPPLYTAGTSANAADLVIPDRFPVFATGRGGEYTYHGPGQRVVYVMLDLKRRRQDVRAFVAALESVIIATLDSMNVKGERREDRVGVWVRRPEKPPLMDGTVAEDKIAAIGIRLRRWVSFHGLSLNVDPDLEHFDGIVPCGIRGHGVTSLVDLGLPVMMADVDIRLREAFEMVFGPTRSETNGIGTARLESE.

The BPL/LPL catalytic domain maps to 60–248 (GTADELVWLV…AFEMVFGPTR (189 aa)). Substrate contacts are provided by residues 99 to 106 (RGGEYTYH), 179 to 181 (AIG), and 192 to 194 (GLS). The active-site Acyl-thioester intermediate is the cysteine 210.

Belongs to the LipB family.

It localises to the cytoplasm. The catalysed reaction is octanoyl-[ACP] + L-lysyl-[protein] = N(6)-octanoyl-L-lysyl-[protein] + holo-[ACP] + H(+). Its pathway is protein modification; protein lipoylation via endogenous pathway; protein N(6)-(lipoyl)lysine from octanoyl-[acyl-carrier-protein]: step 1/2. Functionally, catalyzes the transfer of endogenously produced octanoic acid from octanoyl-acyl-carrier-protein onto the lipoyl domains of lipoate-dependent enzymes. Lipoyl-ACP can also act as a substrate although octanoyl-ACP is likely to be the physiological substrate. The protein is Octanoyltransferase of Sinorhizobium medicae (strain WSM419) (Ensifer medicae).